Consider the following 361-residue polypeptide: 5-exo-hydroxycamphor dehydrogenase (361 aa).

Positions 40, 62, 98, 101, 104, and 170 each coordinate Zn(2+).

The protein belongs to the zinc-containing alcohol dehydrogenase family. It depends on Zn(2+) as a cofactor.

It catalyses the reaction (1R,4R,5R)-5-hydroxycamphor + NAD(+) = (1R,4R)-bornane-2,5-dione + NADH + H(+). It functions in the pathway terpene metabolism; (R)-camphor degradation. The protein is 5-exo-hydroxycamphor dehydrogenase (camD) of Pseudomonas putida (Arthrobacter siderocapsulatus).